A 293-amino-acid chain; its full sequence is Large ribosomal subunit protein uL4c (293 aa).

The transit peptide at 1–50 directs the protein to the chloroplast; it reads MATSTSSSLSLSFFSSSLFSSKSRNFSSKPILKLPSSSHSQTSLSLSIKS. 2 disordered regions span residues 107-138 and 259-293; these read EVRGGGRKPYPQKKTGRARRGSQGSPLRPGGG and YGVDTLEDEDEEEEEEEEGEEVDDGVEDGTPEPAE. The segment covering 116–126 has biased composition (basic residues); sequence YPQKKTGRARR. Acidic residues predominate over residues 263-293; the sequence is TLEDEDEEEEEEEEGEEVDDGVEDGTPEPAE.

This sequence belongs to the universal ribosomal protein uL4 family. Component of the chloroplast large ribosomal subunit (LSU). Mature 70S chloroplast ribosomes of higher plants consist of a small (30S) and a large (50S) subunit. The 30S small subunit contains 1 molecule of ribosomal RNA (16S rRNA) and 24 different proteins. The 50S large subunit contains 3 rRNA molecules (23S, 5S and 4.5S rRNA) and 33 different proteins. Highly expressed in cotyledon and weakly in roots.

It is found in the plastid. It localises to the chloroplast. Component of the chloroplast ribosome (chloro-ribosome), a dedicated translation machinery responsible for the synthesis of chloroplast genome-encoded proteins, including proteins of the transcription and translation machinery and components of the photosynthetic apparatus. In Spinacia oleracea (Spinach), this protein is Large ribosomal subunit protein uL4c (RPL4).